A 452-amino-acid chain; its full sequence is Phosphoglucosamine mutase (452 aa).

The active-site Phosphoserine intermediate is Ser98. The Mg(2+) site is built by Ser98, Asp239, Asp241, and Asp243. Ser98 carries the post-translational modification Phosphoserine.

This sequence belongs to the phosphohexose mutase family. Mg(2+) is required as a cofactor. Post-translationally, activated by phosphorylation.

The enzyme catalyses alpha-D-glucosamine 1-phosphate = D-glucosamine 6-phosphate. Functionally, catalyzes the conversion of glucosamine-6-phosphate to glucosamine-1-phosphate. In Anaplasma marginale (strain Florida), this protein is Phosphoglucosamine mutase.